Consider the following 602-residue polypeptide: Arginine--tRNA ligase (602 aa).

The short motif at 124-134 (ANPTGPVHVGR) is the 'HIGH' region element.

This sequence belongs to the class-I aminoacyl-tRNA synthetase family.

The protein resides in the cytoplasm. It carries out the reaction tRNA(Arg) + L-arginine + ATP = L-arginyl-tRNA(Arg) + AMP + diphosphate. This is Arginine--tRNA ligase from Halorubrum lacusprofundi (strain ATCC 49239 / DSM 5036 / JCM 8891 / ACAM 34).